We begin with the raw amino-acid sequence, 186 residues long: Putative 3-methyladenine DNA glycosylase (186 aa).

Belongs to the DNA glycosylase MPG family.

The protein is Putative 3-methyladenine DNA glycosylase of Borreliella burgdorferi (strain ATCC 35210 / DSM 4680 / CIP 102532 / B31) (Borrelia burgdorferi).